The sequence spans 221 residues: Transcription factor MYB1 (221 aa).

HTH myb-type domains are found at residues 1-57 (MESV…LNYL) and 58-112 (RPNI…QKKL). 2 DNA-binding regions (H-T-H motif) span residues 33–57 (WHQV…LNYL) and 85–108 (WSLI…NTHL). A disordered region spans residues 126-154 (KTIVPKGTEAQPRAHPKSPPRPSPPSNNE).

In terms of tissue distribution, expressed in stems and leaves. Expressed at low levels in ovaries.

Its subcellular location is the nucleus. Its function is as follows. Transcription activator involved in the regulation of anthocyanin biosynthesis in red-fleshed kiwifruit varieties. Activates the transcription of genes involved in anthocyanin biosynthesis, such as dihydroflavonol reductase (DFR), anthocyanidin synthase (ANS) and UDP flavonoid glycosyltransferase (UFGT). This chain is Transcription factor MYB1, found in Actinidia chinensis var. chinensis (Chinese soft-hair kiwi).